Here is a 571-residue protein sequence, read N- to C-terminus: Potassium-transporting ATPase potassium-binding subunit (571 aa).

The next 11 membrane-spanning stretches (helical) occupy residues 5–25 (GWTQITLYGAVVLALVKPLGW), 64–84 (LGYAGALLLFHVFGFLVLYAI), 136–156 (GLTHQNFLSAATGIAVAVALI), 178–198 (ILYVLLPICILYTLFLVWQGI), 254–274 (LSNFVQMVSIFAIGAALTNVF), 285–305 (WAILAAMGALFLAGVAVAYWA), 330–350 (FDIAASALFAVVTTAASCGAV), 357–379 (FTALGGMIPLVNMQLGEVIIGGV), 421–441 (MLGILCLPLMMLGFTALATVL), 488–508 (LAVGMLVGRFFVIIPALAIAG), and 527–547 (GALFVGLLVGVILIIGGLTFF).

The protein belongs to the KdpA family. In terms of assembly, the system is composed of three essential subunits: KdpA, KdpB and KdpC.

Its subcellular location is the cell inner membrane. Its function is as follows. Part of the high-affinity ATP-driven potassium transport (or Kdp) system, which catalyzes the hydrolysis of ATP coupled with the electrogenic transport of potassium into the cytoplasm. This subunit binds the periplasmic potassium ions and delivers the ions to the membrane domain of KdpB through an intramembrane tunnel. The polypeptide is Potassium-transporting ATPase potassium-binding subunit (Methylobacterium nodulans (strain LMG 21967 / CNCM I-2342 / ORS 2060)).